A 372-amino-acid chain; its full sequence is MELVPSARAELQSSPLVNLSDAFPSAFPSAGANASGSPGARSASSLALAIAITALYSAVCAVGLLGNVLVMFGIVRYTKLKTATNIYIFNLALADALATSTLPFQSAKYLMETWPFGELLCKAVLSIDYYNMFTSIFTLTMMSVDRYIAVCHPVKALDFRTPAKAKLINICIWVLASGVGVPIMVMAVTQPRDGAVVCMLQFPSPSWYWDTVTKICVFLFAFVVPILIITVCYGLMLLRLRSVRLLSGSKEKDRSLRRITRMVLVVVGAFVVCWAPIHIFVIVWTLVDINRRDPLVVAALHLCIALGYANSSLNPVLYAFLDENFKRCFRQLCRTPCGRQEPGSLRRPRQATTRERVTACTPSDGPGGGAAA.

The Extracellular segment spans residues 1–47 (MELVPSARAELQSSPLVNLSDAFPSAFPSAGANASGSPGARSASSLA). N-linked (GlcNAc...) asparagine glycans are attached at residues Asn-18 and Asn-33. Residues 48–75 (LAIAITALYSAVCAVGLLGNVLVMFGIV) traverse the membrane as a helical segment. Over 76 to 85 (RYTKLKTATN) the chain is Cytoplasmic. The helical transmembrane segment at 86–110 (IYIFNLALADALATSTLPFQSAKYL) threads the bilayer. Residues 111–122 (METWPFGELLCK) lie on the Extracellular side of the membrane. Residues Cys-121 and Cys-198 are joined by a disulfide bond. A helical transmembrane segment spans residues 123–144 (AVLSIDYYNMFTSIFTLTMMSV). At 145-163 (DRYIAVCHPVKALDFRTPA) the chain is on the cytoplasmic side. Residues 164–186 (KAKLINICIWVLASGVGVPIMVM) traverse the membrane as a helical segment. Topologically, residues 187 to 206 (AVTQPRDGAVVCMLQFPSPS) are extracellular. Residues 207-238 (WYWDTVTKICVFLFAFVVPILIITVCYGLMLL) form a helical membrane-spanning segment. At 239–261 (RLRSVRLLSGSKEKDRSLRRITR) the chain is on the cytoplasmic side. The chain crosses the membrane as a helical span at residues 262-284 (MVLVVVGAFVVCWAPIHIFVIVW). At 285 to 299 (TLVDINRRDPLVVAA) the chain is on the extracellular side. The helical transmembrane segment at 300–321 (LHLCIALGYANSSLNPVLYAFL) threads the bilayer. At 322–372 (DENFKRCFRQLCRTPCGRQEPGSLRRPRQATTRERVTACTPSDGPGGGAAA) the chain is on the cytoplasmic side. Cys-333 carries S-palmitoyl cysteine lipidation. The segment at 340–372 (QEPGSLRRPRQATTRERVTACTPSDGPGGGAAA) is disordered.

This sequence belongs to the G-protein coupled receptor 1 family. In terms of assembly, may form homooligomers. Forms a heterodimer with OPRM1. Interacts with GPRASP1. Interacts with RTP4; the interaction promotes cell surface localization of the OPRD1-OPRM1 heterodimer. In terms of processing, ubiquitinated. A basal ubiquitination seems not to be related to degradation. Ubiquitination is increased upon formation of OPRM1:OPRD1 oligomers leading to proteasomal degradation; the ubiquitination is diminished by RTP4. In terms of tissue distribution, brain, with high concentrations in the basal ganglia and limbic regions.

The protein localises to the cell membrane. Functionally, G-protein coupled receptor that functions as a receptor for endogenous enkephalins and for a subset of other opioids. Ligand binding causes a conformation change that triggers signaling via guanine nucleotide-binding proteins (G proteins) and modulates the activity of down-stream effectors, such as adenylate cyclase. Signaling leads to the inhibition of adenylate cyclase activity. Inhibits neurotransmitter release by reducing calcium ion currents and increasing potassium ion conductance. Plays a role in the perception of pain and in opiate-mediated analgesia. Plays a role in developing analgesic tolerance to morphine. This chain is Delta-type opioid receptor (Oprd1), found in Mus musculus (Mouse).